The primary structure comprises 550 residues: Chaperonin GroEL (550 aa).

ATP-binding positions include 30 to 33 (TLGP), Lys51, 87 to 91 (DGTTT), Gly415, and Asp496.

This sequence belongs to the chaperonin (HSP60) family. Forms a cylinder of 14 subunits composed of two heptameric rings stacked back-to-back. Interacts with the co-chaperonin GroES.

It localises to the cytoplasm. It catalyses the reaction ATP + H2O + a folded polypeptide = ADP + phosphate + an unfolded polypeptide.. Its function is as follows. Together with its co-chaperonin GroES, plays an essential role in assisting protein folding. The GroEL-GroES system forms a nano-cage that allows encapsulation of the non-native substrate proteins and provides a physical environment optimized to promote and accelerate protein folding. In Rickettsia bellii (strain OSU 85-389), this protein is Chaperonin GroEL.